The sequence spans 1960 residues: MAQQAADKYLYVDKNFINNPLAQADWAAKKLVWVPSDKSGFEPASLKEEVGEEAIVELVENGKKVKVNKDDIQKMNPPKFSKVEDMAELTCLNEASVLHNLKERYYSGLIYTYSGLFCVVINPYKNLPIYSEEIVEMYKGKKRHEMPPHIYAITDTAYRSMMQDREDQSILCTGESGAGKTENTKKVIQYLAYVASSHKSKKDQGELERQLLQANPILEAFGNAKTVKNDNSSRFGKFIRINFDVNGYIVGANIETYLLEKSRAIRQAKEERTFHIFYYLLSGAGEHLKTDLLLEPYNKYRFLSNGHVTIPGQQDKDMFQETMEAMRIMGIPEEEQMGLLRVISGVLQLGNIVFKKERNTDQASMPDNTAAQKVSHLLGINVTDFTRGILTPRIKVGRDYVQKAQTKEQADFAIEALAKATYERMFRWLVLRINKALDKTKRQGASFIGILDIAGFEIFDLNSFEQLCINYTNEKLQQLFNHTMFILEQEEYQREGIEWNFIDFGLDLQPCIDLIEKPAGPPGILALLDEECWFPKATDKSFVEKVMQEQGTHPKFQKPKQLKDKADFCIIHYAGKVDYKADEWLMKNMDPLNDNIATLLHQSSDKFVSELWKDVDRIIGLDQVAGMSETALPGAFKTRKGMFRTVGQLYKEQLAKLMATLRNTNPNFVRCIIPNHEKKAGKLDPHLVLDQLRCNGVLEGIRICRQGFPNRVVFQEFRQRYEILTPNSIPKGFMDGKQACVLMIKALELDSNLYRIGQSKVFFRAGVLAHLEEERDLKITDVIIGFQACCRGYLARKAFAKRQQQLTAMKVLQRNCAAYLKLRNWQWWRLFTKVKPLLQVSRQEEEMMAKEEELVKVREKQLAAENRLTEMETLQSQLMAEKLQLQEQLQAETELCAEAEELRARLTAKKQELEEICHDLEARVEEEEERCQHLQAEKKKMQQNIQELEEQLEEEESARQKLQLEKVTTEAKLKKLEEEQIILEDQNCKLAKEKKLLEDRIAEFTTNLTEEEEKSKSLAKLKNKHEAMITDLEERLRREEKQRQELEKTRRKLEGDSTDLSDQIAELQAQIAELKMQLAKKEEELQAALARVEEEAAQKNMALKKIRELESQISELQEDLESERASRNKAEKQKRDLGEELEALKTELEDTLDSTAAQQELRSKREQEVNILKKTLEEEAKTHEAQIQEMRQKHSQAVEELAEQLEQTKRVKANLEKAKQTLENERGELANEVKVLLQGKGDSEHKRKKVEAQLQELQVKFNEGERVRTELADKVTKLQVELDNVTGLLSQSDSKSSKLTKDFSALESQLQDTQELLQEENRQKLSLSTKLKQVEDEKNSFREQLEEEEEAKHNLEKQIATLHAQVADMKKKMEDSVGCLETAEEVKRKLQKDLEGLSQRHEEKVAAYDKLEKTKTRLQQELDDLLVDLDHQRQSACNLEKKQKKFDQLLAEEKTISAKYAEERDRAEAEAREKETKALSLARALEEAMEQKAELERLNKQFRTEMEDLMSSKDDVGKSVHELEKSKRALEQQVEEMKTQLEELEDELQATEDAKLRLEVNLQAMKAQFERDLQGRDEQSEEKKKQLVRQVREMEAELEDERKQRSMAVAARKKLEMDLKDLEAHIDSANKNRDEAIKQLRKLQAQMKDCMRELDDTRASREEILAQAKENEKKLKSMEAEMIQLQEELAAAERAKRQAQQERDELADEIANSSGKGALALEEKRRLEARIAQLEEELEEEQGNTELINDRLKKANLQIDQINTDLNLERSHAQKNENARQQLERQNKELKVKLQEMEGTVKSKYKASITALEAKIAQLEEQLDNETKERQAACKQVRRTEKKLKDVLLQVDDERRNAEQYKDQADKASTRLKQLKRQLEEAEEEAQRANASRRKLQRELEDATETADAMNREVSSLKNKLRRGDLPFVVPRRMARKGAGDGSDEEVDGKADGAEAKPAE.

Alanine 2 carries the post-translational modification N-acetylalanine. The tract at residues 2-838 is mediates interaction with LIMCH1; sequence AQQAADKYLY…RLFTKVKPLL (837 aa). Position 8 is an N6-acetyllysine (lysine 8). Tyrosine 11 carries the post-translational modification Phosphotyrosine. The 51-residue stretch at 27–77 folds into the Myosin N-terminal SH3-like domain; the sequence is AAKKLVWVPSDKSGFEPASLKEEVGEEAIVELVENGKKVKVNKDDIQKMNP. Residues 81–776 form the Myosin motor domain; the sequence is SKVEDMAELT…VLAHLEEERD (696 aa). An N6-acetyllysine modification is found at lysine 102. 174–181 lines the ATP pocket; that stretch reads GESGAGKT. N6-acetyllysine is present on residues lysine 299, lysine 435, and lysine 613. Phosphoserine is present on serine 628. The tract at residues 654–676 is actin-binding; sequence LAKLMATLRNTNPNFVRCIIPNH. At tyrosine 754 the chain carries Phosphotyrosine. The IQ domain occupies 779-808; the sequence is ITDVIIGFQACCRGYLARKAFAKRQQQLTA. Residues 837 to 1926 are a coiled coil; that stretch reads LLQVSRQEEE…LKNKLRRGDL (1090 aa). Lysine 850 carries the post-translational modification N6-succinyllysine. 3 positions are modified to N6-acetyllysine: lysine 860, lysine 975, and lysine 1024. Basic and acidic residues predominate over residues 1035–1055; it reads RLRREEKQRQELEKTRRKLEG. The disordered stretch occupies residues 1035-1057; the sequence is RLRREEKQRQELEKTRRKLEGDS. Serine 1114 is modified (phosphoserine). Positions 1118 to 1137 are disordered; the sequence is EDLESERASRNKAEKQKRDL. Residues 1122 to 1137 show a composition bias toward basic and acidic residues; that stretch reads SERASRNKAEKQKRDL. Lysine 1234, lysine 1249, lysine 1357, lysine 1392, lysine 1404, lysine 1410, lysine 1459, and lysine 1638 each carry N6-acetyllysine. Lysine 1669 carries the N6-succinyllysine modification. Serine 1714 carries the post-translational modification Phosphoserine. Lysine 1793, lysine 1802, and lysine 1845 each carry N6-acetyllysine. Residues 1877–1960 form a disordered region; sequence RQLEEAEEEA…ADGAEAKPAE (84 aa). Arginine 1923 bears the Omega-N-methylarginine mark. Phosphoserine is present on serine 1943. The span at 1948-1960 shows a compositional bias: basic and acidic residues; that stretch reads DGKADGAEAKPAE.

The protein belongs to the TRAFAC class myosin-kinesin ATPase superfamily. Myosin family. As to quaternary structure, myosin is a hexameric protein that consists of 2 heavy chain subunits (MHC), 2 alkali light chain subunits (MLC) and 2 regulatory light chain subunits (MLC-2). Interacts with RASIP1. Interacts with DDR1. Interacts with PDLIM2. Interacts with SVIL. Interacts with HTRA3. Interacts with Myo7a. Interacts with CFAP95. Interacts with LIMCH1; independently of the integration of MYH9 into the myosin complex. Interacts with RAB3A. Interacts with ZBED4. Interacts with S100A4; this interaction increases cell motility. (Microbial infection) Interacts with herpes simplex virus 1/HHV-1 envelope glycoprotein B. ISGylated. Post-translationally, ubiquitination. In the kidney, expressed in the glomeruli. Also expressed in leukocytes.

It is found in the cytoplasm. Its subcellular location is the cytoskeleton. The protein localises to the cell cortex. The protein resides in the cytoplasmic vesicle. It localises to the secretory vesicle. It is found in the cortical granule. Its subcellular location is the cell membrane. Its function is as follows. Cellular myosin that appears to play a role in cytokinesis, cell shape, and specialized functions such as secretion and capping. Required for cortical actin clearance prior to oocyte exocytosis. Promotes cell motility in conjunction with S100A4. During cell spreading, plays an important role in cytoskeleton reorganization, focal contact formation (in the margins but not the central part of spreading cells), and lamellipodial retraction; this function is mechanically antagonized by MYH10. (Microbial infection) Acts as a receptor for herpes simplex virus 1/HHV-1 envelope glycoprotein B. The chain is Myosin-9 (MYH9) from Homo sapiens (Human).